Reading from the N-terminus, the 652-residue chain is MPPPLPLLLLTVLVVAAARPGCEFERNPAGECHRPPAADSATCVDLQLRTCSDAAYNHTTFPNLLQHRSWEVVEASSEYILLSVLHQLLEGQCNPDLRLLGCAVLAPRCEGGWVRRPCRHICEGLREVCQPAFDAIDMAWPYFLDCHRYFTREDEGCYDPLEKLRGGLEADEALPSGLPPTFIRFSHHSYAQMVRVLRRTASRCAHVARTYSIGRSFDGRELLVIEFSSRPGQHELMEPEVKLIGNIHGNEVAGREMLIYLAQYLCSEYLLGNPRIQRLLNTTRIHLLPSMNPDGYEVAAAEGAGYNGWTSGRQNAQNLDLNRNFPDLTSEYYRLAETRGARSDHIPIPQHYWWGKVAPETKAIMKWMQTIPFVLSASLHGGDLVVSYPFDFSKHPQEEKMFSPTPDEKMFKLLSRAYADVHPMMMDRSENRCGGNFLKRGSIINGADWYSFTGGMSDFNYLHTNCFEITVELGCVKFPPEEALYILWQHNKESLLNFVETVHRGIKGVVTDKFGKPVKNARISVKGIRHDITTAPDGDYWRLLPPGIHIVIAQAPGYAKVIKKVIIPARMKRAGRVDFILQPLGMGPKNFIHGLRRTGPHDPLGGASSLGEATEPDPLRARRQPSADGSKPWWWSYFTSLSTHRPRWLLKY.

Positions 1 to 18 (MPPPLPLLLLTVLVVAAA) are cleaved as a signal peptide. Positions 27–160 (NPAGECHRPP…TREDEGCYDP (134 aa)) constitute an FZ domain. 5 disulfide bridges follow: Cys43-Cys109, Cys51-Cys102, Cys93-Cys129, Cys118-Cys157, and Cys122-Cys146. Residues 186–502 (SHHSYAQMVR…ESLLNFVETV (317 aa)) form the Peptidase M14 domain. Positions 248 and 251 each coordinate Zn(2+). N-linked (GlcNAc...) asparagine glycosylation occurs at Asn281. His380 serves as a coordination point for Zn(2+). Glu472 functions as the Proton donor/acceptor in the catalytic mechanism. A disordered region spans residues 595–629 (LRRTGPHDPLGGASSLGEATEPDPLRARRQPSADG).

Belongs to the peptidase M14 family. The cofactor is Zn(2+). As to expression, in placenta, it is present within invasive trophoblasts and in the surrounding extracellular space. Also present in amnion cells, but is not readily apparent in the extracellular matrix of this cell type. Present in normal pituitary gland and neoplastic pituitary gland (especially POMC-, GH- and PRL-producing adenomas) (at protein level). Widely expressed.

Its subcellular location is the secreted. The protein localises to the extracellular space. It localises to the extracellular matrix. Inhibited by 2-mercaptomethyl-3-guanidinoethylthiopropanoic acid (MGTA) and guanidinoethylmercaptosuccinic acid (GEMSA). Inhibited by chelating agents such as EDTA and EGTA. In terms of biological role, cleaves substrates with C-terminal arginine residues. Probably modulates the Wnt signaling pathway, by cleaving some undefined protein. May play a role in cleavage during prohormone processing. The chain is Carboxypeptidase Z (CPZ) from Homo sapiens (Human).